Reading from the N-terminus, the 259-residue chain is Ubiquinone/menaquinone biosynthesis C-methyltransferase UbiE (259 aa).

S-adenosyl-L-methionine is bound by residues T82, D103, N131–A132, and S148.

It belongs to the class I-like SAM-binding methyltransferase superfamily. MenG/UbiE family.

It carries out the reaction a 2-demethylmenaquinol + S-adenosyl-L-methionine = a menaquinol + S-adenosyl-L-homocysteine + H(+). It catalyses the reaction a 2-methoxy-6-(all-trans-polyprenyl)benzene-1,4-diol + S-adenosyl-L-methionine = a 5-methoxy-2-methyl-3-(all-trans-polyprenyl)benzene-1,4-diol + S-adenosyl-L-homocysteine + H(+). Its pathway is quinol/quinone metabolism; menaquinone biosynthesis; menaquinol from 1,4-dihydroxy-2-naphthoate: step 2/2. The protein operates within cofactor biosynthesis; ubiquinone biosynthesis. Methyltransferase required for the conversion of demethylmenaquinol (DMKH2) to menaquinol (MKH2) and the conversion of 2-polyprenyl-6-methoxy-1,4-benzoquinol (DDMQH2) to 2-polyprenyl-3-methyl-6-methoxy-1,4-benzoquinol (DMQH2). The polypeptide is Ubiquinone/menaquinone biosynthesis C-methyltransferase UbiE (Vibrio parahaemolyticus serotype O3:K6 (strain RIMD 2210633)).